The primary structure comprises 214 residues: ATP phosphoribosyltransferase (214 aa).

Belongs to the ATP phosphoribosyltransferase family. Short subfamily. Heteromultimer composed of HisG and HisZ subunits.

Its subcellular location is the cytoplasm. The enzyme catalyses 1-(5-phospho-beta-D-ribosyl)-ATP + diphosphate = 5-phospho-alpha-D-ribose 1-diphosphate + ATP. It functions in the pathway amino-acid biosynthesis; L-histidine biosynthesis; L-histidine from 5-phospho-alpha-D-ribose 1-diphosphate: step 1/9. In terms of biological role, catalyzes the condensation of ATP and 5-phosphoribose 1-diphosphate to form N'-(5'-phosphoribosyl)-ATP (PR-ATP). Has a crucial role in the pathway because the rate of histidine biosynthesis seems to be controlled primarily by regulation of HisG enzymatic activity. This Alcanivorax borkumensis (strain ATCC 700651 / DSM 11573 / NCIMB 13689 / SK2) protein is ATP phosphoribosyltransferase.